The chain runs to 260 residues: MNNLNDPPNWNIRPNSRADGGDGSRWNYALLVPMLGLAAFRWIWSRESQKEVEKEREAYRRRTAAFQQDLEAKYHAMISENRRAVAQLSLELEKEQNRTASYREALISQGRKLVEEKKLLEQERAQVMQEKRQVQPLRSAYLSCLQREENWQRRARLLLKEFEAVLTERQNIYCSLFLPRSKRLEIEKSLLVRASVDPVAADLEMAAGLTDIFQHDTYCGDVWNTNKRQNGRLMWLYLKYWELVVELKKFKRVEEAILEK.

The stretch at 49 to 135 (QKEVEKEREA…QVMQEKRQVQ (87 aa)) forms a coiled coil.

This Homo sapiens (Human) protein is Coiled-coil domain-containing protein 127 (CCDC127).